The primary structure comprises 1256 residues: Cohesin subunit SA-3 (1256 aa).

Residues 1-22 (MPTLWSPSTQHHGSSSGSMSSP) are compositionally biased toward low complexity. The disordered stretch occupies residues 1–110 (MPTLWSPSTQ…GGNDKNKSVP (110 aa)). Residues 72 to 83 (RNVRKRAAKRPP) are compositionally biased toward basic residues. Residues 324-409 (FVHRYRDILP…NRFKDRMVSM (86 aa)) form the SCD domain. 2 disordered regions span residues 1096 to 1169 (RRLQ…GPEL) and 1230 to 1256 (KLLH…MEDF). The span at 1113–1125 (NSGPTTPTLTSTA) shows a compositional bias: polar residues. The span at 1126 to 1140 (VKRRQSPRTVGKRQK) shows a compositional bias: basic residues. Pro residues predominate over residues 1144-1166 (GPGPGPGPGPGPGPGPGPGPGPG). Serine 1234 bears the Phosphoserine mark.

Belongs to the SCC3 family. As to quaternary structure, component of the meiosis-specific cohesin complex, which also contains the SMC1 (SMC1A or SMC1B) and SMC3 heterodimer. Such complex likely contains RAD21, or the meiosis-specific related protein REC8. Interacts with CCDC79/TERB1; recruiting cohesin to telomeres to develop structural rigidity. In terms of processing, phosphorylated. Testis specific.

It localises to the nucleus. The protein resides in the chromosome. Meiosis specific component of cohesin complex. The cohesin complex is required for the cohesion of sister chromatids after DNA replication. The cohesin complex apparently forms a large proteinaceous ring within which sister chromatids can be trapped. At anaphase, the complex is cleaved and dissociates from chromatin, allowing sister chromatids to segregate. The meiosis-specific cohesin complex probably replaces mitosis specific cohesin complex when it dissociates from chromatin during prophase I. The polypeptide is Cohesin subunit SA-3 (Stag3) (Rattus norvegicus (Rat)).